A 255-amino-acid polypeptide reads, in one-letter code: 5'-nucleotidase SurE (255 aa).

Residues D8, D9, S39, and N91 each coordinate a divalent metal cation.

This sequence belongs to the SurE nucleotidase family. The cofactor is a divalent metal cation.

Its subcellular location is the cytoplasm. It catalyses the reaction a ribonucleoside 5'-phosphate + H2O = a ribonucleoside + phosphate. Functionally, nucleotidase that shows phosphatase activity on nucleoside 5'-monophosphates. In Acinetobacter baumannii (strain ATCC 17978 / DSM 105126 / CIP 53.77 / LMG 1025 / NCDC KC755 / 5377), this protein is 5'-nucleotidase SurE.